The sequence spans 292 residues: Aquaporin-3 (292 aa).

Residues 1–24 (MGRQKELVNRCGEMLHIRYRLLRQ) lie on the Cytoplasmic side of the membrane. Residues 25–42 (ALAECLGTLILVMFGCGS) traverse the membrane as a helical segment. Residues 43–56 (VAQVVLSRGTHGGF) lie on the Extracellular side of the membrane. The helical transmembrane segment at 57 to 74 (LTINLAFGFAVTLGILIA) threads the bilayer. The Cytoplasmic segment spans residues 75-78 (GQVS). Positions 79–92 (GAHLNPAVTFAMCF) form an intramembrane region, discontinuously helical. The NPA 1 motif lies at 83 to 85 (NPA). Over 93-100 (LAREPWIK) the chain is Cytoplasmic. The chain crosses the membrane as a helical span at residues 101 to 121 (LPVYTLAQTLGAFLGAGIIFG). Over 122 to 159 (LYYDAIWAFANNQLIVSGPNGTAGIFATYPSGHLDMVN) the chain is Extracellular. An N-linked (GlcNAc...) asparagine glycan is attached at asparagine 141. Residues 160–177 (GFFDQFIGTASLIVCVLA) form a helical membrane-spanning segment. The Cytoplasmic segment spans residues 178 to 189 (IVDPYNNPVPRG). The helical transmembrane segment at 190–206 (LEAFTVGLVVLVIGTSM) threads the bilayer. Residues 207–210 (GFNS) lie on the Extracellular side of the membrane. The discontinuously helical intramembrane region spans 211 to 224 (GYAVNPARDFGPRL). The NPA 2 signature appears at 215–217 (NPA). The Extracellular portion of the chain corresponds to 225-242 (FTAIAGWGSEVFTTGRHW). The helical transmembrane segment at 243–264 (WWVPIVSPLLGSIAGVFVYQLM) threads the bilayer. Over 265-292 (IGCHLEPPPPSTDEENVKLSHVKHKEQM) the chain is Cytoplasmic.

Belongs to the MIP/aquaporin (TC 1.A.8) family. As to quaternary structure, homotetramer; each monomer provides an independent glycerol/water pore. Could also exist in other oligomeric states.

Its subcellular location is the cell membrane. The protein resides in the basolateral cell membrane. The enzyme catalyses glycerol(in) = glycerol(out). The catalysed reaction is H2O(in) = H2O(out). It catalyses the reaction urea(in) = urea(out). It carries out the reaction H2O2(out) = H2O2(in). In terms of biological role, aquaglyceroporins form homotetrameric transmembrane channels, with each monomer independently mediating glycerol and water transport across the plasma membrane along their osmotic gradient. Could also be permeable to urea. Also participates in cell permeability to H2O2 and H2O2-mediated signaling. In skin, transports glycerol to the epidermis and stratum corneum, where it maintains hydration, elasticity, and supports lipid biosynthesis for barrier repair. In kidney, contributes to the reabsorption of water, helping the body maintain proper fluid balance. In Bos taurus (Bovine), this protein is Aquaporin-3.